Consider the following 166-residue polypeptide: MVMKKIIMTNFNCDNCGDCVKACMEKNKVGRIAIMEKDGKYIPIVCQHCASAPCKEVCPVSAIEHKDGYVYLNEDVCIGCGLCALACPFGAILMEDKAYKCILCNGDEPACVKACSKRCLELVDVNELIFAKRDKSLDLFSKMSLPTQKSDNSLISKITIDAKVKP.

4Fe-4S ferredoxin-type domains follow at residues 3–33, 37–67, and 68–97; these read MKKIIMTNFNCDNCGDCVKACMEKNKVGRIA, KDGKYIPIVCQHCASAPCKEVCPVSAIEHKD, and GYVYLNEDVCIGCGLCALACPFGAILMEDK. [4Fe-4S] cluster contacts are provided by Cys13, Cys16, Cys19, Cys23, Cys46, Cys49, Cys54, Cys58, Cys77, Cys80, Cys83, Cys87, Cys101, Cys104, Cys111, and Cys115.

It depends on [4Fe-4S] cluster as a cofactor.

This is an uncharacterized protein from Methanocaldococcus jannaschii (strain ATCC 43067 / DSM 2661 / JAL-1 / JCM 10045 / NBRC 100440) (Methanococcus jannaschii).